Here is an 898-residue protein sequence, read N- to C-terminus: Transportin-1 (898 aa).

20 HEAT repeats span residues 19-46, 51-89, 98-131, 137-174, 181-211, 224-251, 263-290, 306-397, 405-433, 445-472, 486-519, 527-560, 568-606, 614-665, 676-707, 715-748, 756-791, 799-832, 841-872, and 875-895; these read GLQQ…QKLE, YPDF…AHFQ, FIKS…KGEL, LLPK…LDSD, NIMI…QFII, FIEN…VMLL, HNIV…FWLT, PKLI…LANV, HILP…GAIA, PELI…TLSR, LKPL…EEEA, LAYI…ADSV, EYIQ…TALQ, EPVY…GLGG, ILTL…KACF, ADFM…IQMG, PMVL…YVCP, QQFI…ISVN, IFFC…KNQV, and ENWR…LAAF. An Importin N-terminal domain is found at 41 to 109; the sequence is VQQKLEQLNQ…KSECLNNIGD (69 aa). Positions 347 to 374 are disordered; it reads FHRSRTVAQQHEEDGIEEEDDDDDEIDD. Positions 360 to 374 are enriched in acidic residues; that stretch reads DGIEEEDDDDDEIDD.

It belongs to the importin beta family. Importin beta-2 subfamily. In terms of assembly, identified in a complex that contains TNPO1, RAN and RANBP1. Binds HNRPA1, HNRPA2, HNRNPDL, RPS7, RPL5 and RAN. Interacts with H2A, H2B, H3 and H4 histones. Interacts with isoform 1 and isoform 5 of ADAR/ADAR1 (via DRBM 3 domain). Interacts with SNAI1 (via zinc fingers); the interaction mediates SNAI1 nuclear import. Interacts with SNAI2 (via zinc fingers). Interacts with RPL23A (via BIB domain) and SRP19; this interaction is involved in RPL23A and SRP19 import into the nucleus. Interacts (via HEAT repeats 8-12) with BAP1 (via non-classical PY-NLS); this interaction is direct, is involved in BAP1 nuclear import and disrupts BAP1 homodimerization.

The protein resides in the cytoplasm. It localises to the nucleus. Functions in nuclear protein import as nuclear transport receptor. Serves as receptor for nuclear localization signals (NLS) in cargo substrates. May mediate docking of the importin/substrate complex to the nuclear pore complex (NPC) through binding to nucleoporin and the complex is subsequently translocated through the pore by an energy requiring, Ran-dependent mechanism. At the nucleoplasmic side of the NPC, Ran binds to the importin, the importin/substrate complex dissociates and importin is re-exported from the nucleus to the cytoplasm where GTP hydrolysis releases Ran. The directionality of nuclear import is thought to be conferred by an asymmetric distribution of the GTP- and GDP-bound forms of Ran between the cytoplasm and nucleus. Involved in nuclear import of M9-containing proteins. In vitro, binds directly to the M9 region of the heterogeneous nuclear ribonucleoproteins (hnRNP), A1 and A2 and mediates their nuclear import. Involved in hnRNP A1/A2 nuclear export. Mediates the nuclear import of ribosomal proteins RPL23A, RPS7 and RPL5. In vitro, mediates nuclear import of SRP19. Mediates the import of histones H2A, H2B, H3 and H4. Mediates nuclear import of ADAR/ADAR1 in a RanGTP-dependent manner. Main mediator of PR-DUB complex component BAP1 nuclear import; acts redundantly with the karyopherins KPNA1 and KPNA2. In Mus musculus (Mouse), this protein is Transportin-1 (Tnpo1).